Reading from the N-terminus, the 499-residue chain is GTPase Der (499 aa).

2 EngA-type G domains span residues 3 to 166 and 211 to 384; these read PVVA…MDEV and IKLA…DCST. Residues 9-16, 56-60, 118-121, 217-224, 264-268, and 329-332 contribute to the GTP site; these read GRPNVGKS, DTGGI, NKTD, DTAGV, and NKWD. The region spanning 385–469 is the KH-like domain; that stretch reads RRVNTSMLTR…PIRIQFKEGD (85 aa).

Belongs to the TRAFAC class TrmE-Era-EngA-EngB-Septin-like GTPase superfamily. EngA (Der) GTPase family. Associates with the 50S ribosomal subunit.

GTPase that plays an essential role in the late steps of ribosome biogenesis. The protein is GTPase Der of Erwinia tasmaniensis (strain DSM 17950 / CFBP 7177 / CIP 109463 / NCPPB 4357 / Et1/99).